The sequence spans 285 residues: MNRLPDDYDPYAVEEPSDEEPALSSSEDEVDVLLHGTPDQKRKLIRECLTGESESSSEDEFEKEMEAELNSTMKTMEDKLSSLGTGSSSGNGKVATAPTRYYDDIYFDSDSEDEDRAVQVTKKKKKKQHKIPTNDELLYDPEKDNRDQAWVDAQRRGYHGLGPQRSRQQQPVPNSDAVLNCPACMTTLCLDCQRHESYKTQYRAMFVMNCSINKEEVLRYKASENRKKRRVHKKMRSNREDAAEKAETDVEEIYHPVMCTECSTEVAVYDKDEVFHFFNVLASHS.

The residue at position 1 (Met1) is an N-acetylmethionine. The interval 1–30 (MNRLPDDYDPYAVEEPSDEEPALSSSEDEV) is disordered. A compositionally biased stretch (acidic residues) spans 15 to 30 (EPSDEEPALSSSEDEV). Residue Ser17 is modified to Phosphoserine. Position 37 is a phosphothreonine (Thr37). Residues 48–96 (CLTGESESSSEDEFEKEMEAELNSTMKTMEDKLSSLGTGSSSGNGKVAT) are disordered. Over residues 55–67 (SSSEDEFEKEMEA) the composition is skewed to acidic residues. Residues 81-92 (SSLGTGSSSGNG) show a composition bias toward low complexity. 2 positions are modified to phosphoserine: Ser109 and Ser111. The disordered stretch occupies residues 118–144 (VQVTKKKKKKQHKIPTNDELLYDPEKD). Basic residues predominate over residues 121-130 (TKKKKKKQHK).

As to quaternary structure, interacts with E2F1. The C-terminal half binds the N-terminal of E2F1. Also interacts with E2F2 and E2F3, but not E2F4. As to expression, ubiquitously expressed. Highest levels in heart, placenta, skeletal muscle and pancreas. Lower levels in brain, lung and kidney. In the brain, expressed in all regions with high levels in the cerebellum and cerebral cortex. Expressed in COS1 and transformed skin fibroblasts.

It localises to the cytoplasm. The protein resides in the nucleus. In terms of biological role, may play an important role in the fine-tuning of both major E2F1 activities, the regulation of the cell-cycle and the induction of apoptosis. Promotes S-phase entry, and inhibits p14(ARP) expression. The chain is E2F-associated phosphoprotein (EAPP) from Homo sapiens (Human).